The sequence spans 433 residues: Serine--tRNA ligase (433 aa).

Residue 235 to 237 (TSE) participates in L-serine binding. An ATP-binding site is contributed by 266–268 (RSE). Glu-289 is a binding site for L-serine. 353-356 (EISS) is an ATP binding site. Ser-388 contacts L-serine.

It belongs to the class-II aminoacyl-tRNA synthetase family. Type-1 seryl-tRNA synthetase subfamily. As to quaternary structure, homodimer. The tRNA molecule binds across the dimer.

The protein resides in the cytoplasm. It catalyses the reaction tRNA(Ser) + L-serine + ATP = L-seryl-tRNA(Ser) + AMP + diphosphate + H(+). It carries out the reaction tRNA(Sec) + L-serine + ATP = L-seryl-tRNA(Sec) + AMP + diphosphate + H(+). It functions in the pathway aminoacyl-tRNA biosynthesis; selenocysteinyl-tRNA(Sec) biosynthesis; L-seryl-tRNA(Sec) from L-serine and tRNA(Sec): step 1/1. In terms of biological role, catalyzes the attachment of serine to tRNA(Ser). Is also able to aminoacylate tRNA(Sec) with serine, to form the misacylated tRNA L-seryl-tRNA(Sec), which will be further converted into selenocysteinyl-tRNA(Sec). This Burkholderia thailandensis (strain ATCC 700388 / DSM 13276 / CCUG 48851 / CIP 106301 / E264) protein is Serine--tRNA ligase.